The following is a 542-amino-acid chain: Phosphoacetylglucosamine mutase (542 aa).

An N-acetylmethionine modification is found at Met-1. A Phosphothreonine modification is found at Thr-62. The Phosphoserine intermediate role is filled by Ser-64. Mg(2+) is bound by residues Ser-64, Asp-276, Asp-278, and Asp-280. A Phosphoserine modification is found at Ser-64. Substrate contacts are provided by residues 370-372 (EAN), 496-500 (RPSGT), and Arg-505.

This sequence belongs to the phosphohexose mutase family. It depends on Mg(2+) as a cofactor.

The catalysed reaction is N-acetyl-alpha-D-glucosamine 1-phosphate = N-acetyl-D-glucosamine 6-phosphate. It participates in nucleotide-sugar biosynthesis; UDP-N-acetyl-alpha-D-glucosamine biosynthesis; N-acetyl-alpha-D-glucosamine 1-phosphate from alpha-D-glucosamine 6-phosphate (route I): step 2/2. Functionally, catalyzes the conversion of GlcNAc-6-P into GlcNAc-1-P during the synthesis of uridine diphosphate/UDP-GlcNAc, a sugar nucleotide critical to multiple glycosylation pathways including protein N- and O-glycosylation. The sequence is that of Phosphoacetylglucosamine mutase from Mus musculus (Mouse).